A 281-amino-acid chain; its full sequence is MTTTSAPDVYCVMGHPVEHSRSPWIHARFAELTGQRIAYTRRLVPLDGFARALADFAAAGGAGCNVTVPFKHDAARLATHASDRVRRAGAANTLSFRADGTVHAENTDGLGLVADIVVNAGVALAGRDVLLVGAGGAAAGVLAPLLDQAPRRITVANRTEARAQALVQAHADLAASRQVVLEALPIGQPGTGFDVVINATASSLAGGEVPVPDTVLREGTLAYDMMYGPAAQGFMDWARAHGAVPRDGLGMLVEQAAEAFAVWRGVRPPAAQVLQELRAQL.

Shikimate contacts are provided by residues 20 to 22 and T67; that span reads SRS. K71 functions as the Proton acceptor in the catalytic mechanism. D83 is an NADP(+) binding site. Shikimate is bound by residues N92 and D108. Residues 133–137, 157–162, and M225 each bind NADP(+); these read GAGGA and NRTEAR. Y227 contacts shikimate. G248 contacts NADP(+).

It belongs to the shikimate dehydrogenase family. As to quaternary structure, homodimer.

It carries out the reaction shikimate + NADP(+) = 3-dehydroshikimate + NADPH + H(+). The protein operates within metabolic intermediate biosynthesis; chorismate biosynthesis; chorismate from D-erythrose 4-phosphate and phosphoenolpyruvate: step 4/7. In terms of biological role, involved in the biosynthesis of the chorismate, which leads to the biosynthesis of aromatic amino acids. Catalyzes the reversible NADPH linked reduction of 3-dehydroshikimate (DHSA) to yield shikimate (SA). This Paracidovorax citrulli (strain AAC00-1) (Acidovorax citrulli) protein is Shikimate dehydrogenase (NADP(+)).